The following is a 512-amino-acid chain: Allene oxide synthase 1, chloroplastic (512 aa).

The transit peptide at 1-25 (MATAAACISFASPSPARVVIRRQTR) directs the protein to the chloroplast. The interval 23–43 (QTRASASASATDRQEVVSPKR) is disordered. The heme b site is built by Lys127, His158, and Lys162. Position 315 (Asn315) interacts with (13S)-hydroperoxy-(9Z,11E,15Z)-octadecatrienoate. The heme b site is built by Lys463 and Cys465.

The protein belongs to the cytochrome P450 family. Heme b is required as a cofactor. Expressed in coleoptiles, and at lower level in leaves of dark-grown seedlings.

Its subcellular location is the plastid. The protein resides in the chloroplast membrane. It carries out the reaction (13S)-hydroperoxy-(9Z,11E,15Z)-octadecatrienoate = (9Z,13S,15Z)-12,13-epoxyoctadeca-9,11,15-trienoate + H2O. Its pathway is lipid metabolism; oxylipin biosynthesis. Involved in the biosynthesis of jasmonic acid, a growth regulator that is implicated also as a signaling molecule in plant defense. Converts 13-hydroperoxylinolenic acid to 12,13-epoxylinolenic acid. The sequence is that of Allene oxide synthase 1, chloroplastic (CYP74A1) from Oryza sativa subsp. japonica (Rice).